The chain runs to 433 residues: Gamma-glutamyl phosphate reductase (433 aa).

It belongs to the gamma-glutamyl phosphate reductase family.

Its subcellular location is the cytoplasm. It catalyses the reaction L-glutamate 5-semialdehyde + phosphate + NADP(+) = L-glutamyl 5-phosphate + NADPH + H(+). It participates in amino-acid biosynthesis; L-proline biosynthesis; L-glutamate 5-semialdehyde from L-glutamate: step 2/2. Its function is as follows. Catalyzes the NADPH-dependent reduction of L-glutamate 5-phosphate into L-glutamate 5-semialdehyde and phosphate. The product spontaneously undergoes cyclization to form 1-pyrroline-5-carboxylate. In Psychrobacter cryohalolentis (strain ATCC BAA-1226 / DSM 17306 / VKM B-2378 / K5), this protein is Gamma-glutamyl phosphate reductase.